The primary structure comprises 756 residues: Serine/threonine-protein kinase DCLK2 (756 aa).

The tract at residues 1–44 (MASTRSIELEHFEERDKRPRPGSRRGAPSSSGGSSISGPKGNGL) is disordered. Over residues 7-19 (IELEHFEERDKRP) the composition is skewed to basic and acidic residues. The span at 24-43 (RRGAPSSSGGSSISGPKGNG) shows a compositional bias: low complexity. T61 bears the Phosphothreonine mark. 2 Doublecortin domains span residues 72 to 158 (KKAR…VDYT) and 196 to 279 (KLVT…AQDD). Composition is skewed to low complexity over residues 301–311 (KYSGSRSPGFS) and 323–346 (TPSS…SPGS). The disordered stretch occupies residues 301-375 (KYSGSRSPGF…GPELDRCLSP (75 aa)). Positions 353–364 (ISAQGRSSSNVN) are enriched in polar residues. Phosphoserine is present on S361. The Protein kinase domain maps to 393–650 (YRIGKVIGDG…AGEILSHPWV (258 aa)). ATP-binding positions include 399 to 407 (IGDGNFAVV) and K422. The active-site Proton acceptor is D514. A Phosphoserine modification is found at S646. A Phosphothreonine modification is found at T665. A disordered region spans residues 707-756 (QDSSRPSREQTSPVPPSAQEAPPPLESPRPPGPPATSGCDLAGTWRRHRD). Pro residues predominate over residues 719–740 (PVPPSAQEAPPPLESPRPPGPP).

It belongs to the protein kinase superfamily. CAMK Ser/Thr protein kinase family. CaMK subfamily. As to quaternary structure, binds to and stabilizes microtubules. Interacts with MAPK8IP1/JIP-1, MAPK8IP2/JIP-2, MAPK9/JNK2, PPP1R9B/NEURABIN-2 and actin. In terms of processing, autophosphorylated. In terms of tissue distribution, expressed in the central and peripheral nervous system including the brain, spinal cord, cranial and dorsal root ganglia and in the parasympathetic ganglia. Present in neurons, but not in glial cells, in most forebrain areas. Strong expression in the hippocampal CA1 pyramidal cell layer. Expressed in the photoreceptor sensory cilium complex and in eyes. Also detected in individual cells of the olfactory epithelium.

It localises to the cytoplasm. The protein resides in the cytoskeleton. It carries out the reaction L-seryl-[protein] + ATP = O-phospho-L-seryl-[protein] + ADP + H(+). The catalysed reaction is L-threonyl-[protein] + ATP = O-phospho-L-threonyl-[protein] + ADP + H(+). Functionally, protein kinase with a significantly reduced Ca(2+)+/CAM affinity and dependence compared to other members of the CaMK family. May play a role in the down-regulation of CRE-dependent gene activation probably by phosphorylation of the CREB coactivator CRTC2/TORC2 and the resulting retention of TORC2 in the cytoplasm. This chain is Serine/threonine-protein kinase DCLK2 (Dclk2), found in Mus musculus (Mouse).